A 911-amino-acid polypeptide reads, in one-letter code: ATP-dependent DNA helicase Q-like 5 (911 aa).

A disordered region spans residues 1–84; the sequence is MDFDSDSDGS…PPPSPLFTNL (84 aa). Residues 20-48 are compositionally biased toward low complexity; it reads SFPSSPPQLQSPAKHVPPVSRKMTSSSSR. Residues 54 to 79 are compositionally biased toward pro residues; that stretch reads PTHPPPNPSQEAPVPSPYPPPPPPSP. One can recognise a Helicase ATP-binding domain in the interval 278–448; sequence IKMILGGSST…MSSLEIPSTN (171 aa). 291–298 serves as a coordination point for ATP; sequence LPTGAGKS. Positions 390-393 match the DEAH box motif; sequence DEAH. One can recognise a Helicase C-terminal domain in the interval 470-628; that stretch reads RMKDLLILME…VFSTETKQHE (159 aa).

This sequence belongs to the helicase family. RecQ subfamily. Mostly expressed in roots, seedlings, shoots, shoot apical mersitem, flowers, and siliques.

The protein resides in the nucleus. It catalyses the reaction Couples ATP hydrolysis with the unwinding of duplex DNA by translocating in the 3'-5' direction.. It carries out the reaction ATP + H2O = ADP + phosphate + H(+). Functionally, 3'-5' DNA helicase that may play a role in the repair of DNA. This chain is ATP-dependent DNA helicase Q-like 5 (RECQL5), found in Arabidopsis thaliana (Mouse-ear cress).